Here is a 311-residue protein sequence, read N- to C-terminus: 4-diphosphocytidyl-2-C-methyl-D-erythritol kinase (311 aa).

Lysine 10 is an active-site residue. Position 105 to 115 (105 to 115 (PVAGGMAGGSA)) interacts with ATP. Residue aspartate 146 is part of the active site.

The protein belongs to the GHMP kinase family. IspE subfamily.

It carries out the reaction 4-CDP-2-C-methyl-D-erythritol + ATP = 4-CDP-2-C-methyl-D-erythritol 2-phosphate + ADP + H(+). It participates in isoprenoid biosynthesis; isopentenyl diphosphate biosynthesis via DXP pathway; isopentenyl diphosphate from 1-deoxy-D-xylulose 5-phosphate: step 3/6. Its function is as follows. Catalyzes the phosphorylation of the position 2 hydroxy group of 4-diphosphocytidyl-2C-methyl-D-erythritol. This chain is 4-diphosphocytidyl-2-C-methyl-D-erythritol kinase, found in Corynebacterium glutamicum (strain ATCC 13032 / DSM 20300 / JCM 1318 / BCRC 11384 / CCUG 27702 / LMG 3730 / NBRC 12168 / NCIMB 10025 / NRRL B-2784 / 534).